A 197-amino-acid chain; its full sequence is MPPAGLRRAAPLTAIALLVLGAPLVLAGEDCLWYLDRNGSWHPGFNCEFFTFCCGTCYHRYCCRDLTLLITERQQKHCLAFSPKTIAGIASAVILFVAVVATTICCFLCSCCYLYRRRQQLQSPFEGQEIPMTGIPVQPVYPYPQDPKAGPAPPQPGFIYPPSGPAPQYPLYPAGPPVYNPAAPPPYMPPQPSYPGA.

The first 27 residues, 1–27 (MPPAGLRRAAPLTAIALLVLGAPLVLA), serve as a signal peptide directing secretion. Over 28–87 (GEDCLWYLDRNGSWHPGFNCEFFTFCCGTCYHRYCCRDLTLLITERQQKHCLAFSPKTIA) the chain is Extracellular. Residues 88–108 (GIASAVILFVAVVATTICCFL) form a helical membrane-spanning segment. Topologically, residues 109 to 197 (CSCCYLYRRR…MPPQPSYPGA (89 aa)) are cytoplasmic.

It belongs to the shisa family.

The protein resides in the membrane. The protein is Protein shisa-4 (SHISA4) of Homo sapiens (Human).